Consider the following 109-residue polypeptide: Protein reprimo (109 aa).

N-linked (GlcNAc...) asparagine glycosylation is found at asparagine 7 and asparagine 18. A helical transmembrane segment spans residues 56–76 (VVQIAVMCVLSLTVVFGIFFL). Residue serine 98 is modified to Phosphoserine.

It belongs to the reprimo family.

The protein resides in the cytoplasm. The protein localises to the membrane. May be involved in the regulation of p53-dependent G2 arrest of the cell cycle. Seems to induce cell cycle arrest by inhibiting CDK1 activity and nuclear translocation of the CDC2 cyclin B1 complex. The polypeptide is Protein reprimo (RPRM) (Homo sapiens (Human)).